Consider the following 129-residue polypeptide: Lysozyme C-1 (129 aa).

Residues 1-129 (KVFERCELAR…VSSYVEGCTL (129 aa)) form the C-type lysozyme domain. Intrachain disulfides connect Cys6/Cys127, Cys30/Cys115, Cys65/Cys81, and Cys77/Cys95. Catalysis depends on residues Glu35 and Asp53.

Belongs to the glycosyl hydrolase 22 family. As to quaternary structure, monomer.

The enzyme catalyses Hydrolysis of (1-&gt;4)-beta-linkages between N-acetylmuramic acid and N-acetyl-D-glucosamine residues in a peptidoglycan and between N-acetyl-D-glucosamine residues in chitodextrins.. Its function is as follows. Lysozymes have primarily a bacteriolytic function; those in tissues and body fluids are associated with the monocyte-macrophage system and enhance the activity of immunoagents. The polypeptide is Lysozyme C-1 (Capra hircus (Goat)).